Reading from the N-terminus, the 1707-residue chain is Histone-lysine N-methyltransferase SETD1A (1707 aa).

The tract at residues 60 to 89 (LQDPRCHVRSKNRDFSLPVPKFKLDEFYIG) is interaction with WDR82. Positions 84–172 (DEFYIGQIPL…NIIHAQLDIK (89 aa)) constitute an RRM domain. Disordered stretches follow at residues 194 to 308 (PTGG…YQDA), 331 to 363 (TAAT…RSSD), 381 to 486 (SYPP…AQHS), 506 to 655 (LASD…PPPH), 834 to 854 (AKPF…EKTK), 891 to 1251 (PSFK…GTEV), and 1264 to 1293 (ARRG…RPLL). The span at 239–277 (NGTPCSQDTSFSSSRQDTPSSFGQFTPQSSQGTPYTSRG) shows a compositional bias: polar residues. 2 stretches are compositionally biased toward low complexity: residues 278-295 (STPY…TSTS) and 331-357 (TAAT…SSSS). Over residues 430–440 (SEAPPPEPPEP) the composition is skewed to pro residues. 2 positions are modified to phosphoserine: S459 and S464. The segment covering 459–473 (SPRPASPARSGSPAP) has biased composition (low complexity). The segment covering 474–486 (ETTNESVPFAQHS) has biased composition (polar residues). A phosphoserine mark is found at S508 and S565. The span at 568–578 (ANGQNQASPCS) shows a compositional bias: polar residues. Pro residues-rich tracts occupy residues 593–617 (SPPP…PPPY) and 624–655 (GYPP…PPPH). A compositionally biased stretch (basic and acidic residues) spans 844 to 854 (QAKEEDKEKTK). S915 carries the phosphoserine modification. 2 stretches are compositionally biased toward acidic residues: residues 918–927 (AEEDEDDPEQ) and 976–992 (KDEE…DREE). Over residues 993–1002 (AVDTTKKETE) the composition is skewed to basic and acidic residues. The span at 1003 to 1012 (VSDGEDEESD) shows a compositional bias: acidic residues. A compositionally biased stretch (low complexity) spans 1032–1060 (DSESSSSSSSSSSSSSSSSSSSSSSSSES). Over residues 1077 to 1094 (ASPPPREVPVPTPAPVEV) the composition is skewed to pro residues. Phosphoserine is present on S1103. Positions 1127 to 1145 (PSAPLRPPEPPAGPPAPAP) are enriched in pro residues. Positions 1275–1284 (EDSEATETSD) are enriched in acidic residues. The HCFC1-binding motif (HBM) motif lies at 1299 to 1303 (EHNYA). 2 disordered regions span residues 1307 to 1417 (KPTP…AYEP) and 1472 to 1499 (NLTT…SEGY). Residues 1308-1323 (PTPPAPALRPPEPVPA) are compositionally biased toward pro residues. The segment covering 1360–1377 (EGEEEGEEEGEEEEEESS) has biased composition (acidic residues). Residues 1390–1403 (RRRSLRSHARRRRP) show a composition bias toward basic residues. Over residues 1404–1414 (PPPPPPPPPRA) the composition is skewed to pro residues. The interaction with CFP1 stretch occupies residues 1415 to 1450 (YEPRSEFEQMTILYDIWNSGLDSEDMSYLRLTYERL). The interaction with ASH2L, RBBP5 and WDR5 stretch occupies residues 1450–1537 (LLQQTSGADW…GTNRVLSERR (88 aa)). The short motif at 1492 to 1497 (GSARSE) is the WDR5 interaction motif (WIN) element. Positions 1537–1542 (RSEQRR) match the RxxxRR motif motif. The SET domain maps to 1568–1685 (KKLRFGRSRI…VDEEITYDYK (118 aa)). Y1684 lines the S-adenosyl-L-methionine pocket. One can recognise a Post-SET domain in the interval 1691-1707 (NKIPCLCGTESCRGSLN).

The protein belongs to the class V-like SAM-binding methyltransferase superfamily. In terms of assembly, component of the SET1A/COMPASS complex composed of the catalytic subunit SETD1A, WDR5, WDR82, RBBP5, ASH2L/ASH2, CXXC1/CFP1, HCFC1 and DPY30 homotrimer. Forms a core complex with the evolutionary conserved subcomplex WRAD composed of WDR5, RBBP5, ASH2L/ASH2 and DPY30 subunits; WRAD differentially stimulates the methyltransferase activity. Interacts with BOD1L1 (via COMPASS-Shg1 domain) at replication forks. Interacts with HCFC1. Interacts with ASH2/ASH2L. Interacts with CXXC1/CFP1. Interacts with RBBP5. Interacts (via N-terminal region) with WDR82; the interaction is direct. Interacts (via the RRM domain) with hyperphosphorylated C-terminal domain (CTD) of RNA polymerase II large subunit (POLR2A) only in the presence of WDR82. Binds specifically to CTD heptad repeats phosphorylated on 'Ser-5' of each heptad. Interacts with ZNF335. Interacts with SUPT6H. Interacts with NAP1L1. Interacts (via WIN motif) with WDR5.

It is found in the nucleus speckle. The protein localises to the chromosome. It localises to the cytoplasm. It carries out the reaction L-lysyl(4)-[histone H3] + S-adenosyl-L-methionine = N(6)-methyl-L-lysyl(4)-[histone H3] + S-adenosyl-L-homocysteine + H(+). The catalysed reaction is N(6)-methyl-L-lysyl(4)-[histone H3] + S-adenosyl-L-methionine = N(6),N(6)-dimethyl-L-lysyl(4)-[histone H3] + S-adenosyl-L-homocysteine + H(+). The enzyme catalyses N(6),N(6)-dimethyl-L-lysyl(4)-[histone H3] + S-adenosyl-L-methionine = N(6),N(6),N(6)-trimethyl-L-lysyl(4)-[histone H3] + S-adenosyl-L-homocysteine + H(+). Functionally, histone methyltransferase that catalyzes methyl group transfer from S-adenosyl-L-methionine to the epsilon-amino group of 'Lys-4' of histone H3 (H3K4) via a non-processive mechanism. Part of chromatin remodeling machinery, forms H3K4me1, H3K4me2 and H3K4me3 methylation marks at active chromatin sites where transcription and DNA repair take place. Responsible for H3K4me3 enriched promoters and transcriptional programming of inner mass stem cells and neuron progenitors during embryogenesis. Required for H3K4me1 mark at stalled replication forks. Mediates FANCD2-dependent nucleosome remodeling and RAD51 nucleofilaments stabilization at reversed forks, protecting them from nucleolytic degradation. Does not methylate 'Lys-4' of histone H3 if the neighboring 'Lys-9' residue is already methylated. Binds RNAs involved in RNA processing and the DNA damage response. This Homo sapiens (Human) protein is Histone-lysine N-methyltransferase SETD1A (SETD1A).